A 560-amino-acid polypeptide reads, in one-letter code: Arginine--tRNA ligase (560 aa).

The short motif at 122–132 is the 'HIGH' region element; sequence ANPNGPLHVGH.

This sequence belongs to the class-I aminoacyl-tRNA synthetase family.

It localises to the cytoplasm. The enzyme catalyses tRNA(Arg) + L-arginine + ATP = L-arginyl-tRNA(Arg) + AMP + diphosphate. The protein is Arginine--tRNA ligase of Methanosphaera stadtmanae (strain ATCC 43021 / DSM 3091 / JCM 11832 / MCB-3).